Reading from the N-terminus, the 299-residue chain is GTPase Era (299 aa).

In terms of domain architecture, Era-type G spans lysine 4–glutamate 171. The segment at glycine 12–serine 19 is G1. Glycine 12–serine 19 contributes to the GTP binding site. Residues glutamine 38–asparagine 42 form a G2 region. A G3 region spans residues aspartate 59–glycine 62. Residues aspartate 59–isoleucine 63 and asparagine 121–aspartate 124 each bind GTP. A G4 region spans residues asparagine 121–aspartate 124. A G5 region spans residues isoleucine 150 to alanine 152. One can recognise a KH type-2 domain in the interval threonine 202 to lysine 280.

The protein belongs to the TRAFAC class TrmE-Era-EngA-EngB-Septin-like GTPase superfamily. Era GTPase family. As to quaternary structure, monomer.

It is found in the cytoplasm. Its subcellular location is the cell membrane. Its function is as follows. An essential GTPase that binds both GDP and GTP, with rapid nucleotide exchange. Plays a role in 16S rRNA processing and 30S ribosomal subunit biogenesis and possibly also in cell cycle regulation and energy metabolism. The protein is GTPase Era of Streptococcus suis (strain 98HAH33).